The following is a 1559-amino-acid chain: Bile pigment transporter 1 (1559 aa).

At 1–29 (MSSLEVVDGCPYGYRPYPDSGTNALNPCF) the chain is on the vacuolar side. A helical transmembrane segment spans residues 30-50 (ISVISAWQAVFFLLIGSYQLW). The Cytoplasmic portion of the chain corresponds to 51-84 (KLYKNNKVPPRFKNFPTLPSKINSRHLTHLTNVC). A helical transmembrane segment spans residues 85–105 (FQSTLIICELALVSQSSDRVY). The Vacuolar portion of the chain corresponds to 106–110 (PFILK). The helical transmembrane segment at 111–127 (KALYLNLLFNLGISLPT) threads the bilayer. The Cytoplasmic portion of the chain corresponds to 128–139 (QYLAYFKSTFSM). A helical membrane pass occupies residues 140 to 160 (GNQLFYYMFQILLQLFLILQR). Residues 161–178 (YYHGSSNERLTVISGQTA) are Vacuolar-facing. Residues 179–199 (MILEVLLLFNSVAIFIYDLCI) form a helical membrane-spanning segment. Topologically, residues 200-283 (FEPINELSEY…WLNRNSLWRA (84 aa)) are cytoplasmic. The helical transmembrane segment at 284–304 (IWKSFGRTISVAMLYETTSDL) threads the bilayer. The 287-residue stretch at 292 to 578 (ISVAMLYETT…VPSMINTIIE (287 aa)) folds into the ABC transmembrane type-1 1 domain. Over 305 to 333 (LSVVQPQFLRIFIDGLNPETSSKYPPLNG) the chain is Vacuolar. The helical transmembrane segment at 334–354 (VFIALTLFVISVVSVFLTNQF) threads the bilayer. The Cytoplasmic portion of the chain corresponds to 355-410 (YIGIFEAGLGIRGSLASLVYQKSLRLTLAERNEKSTGDILNLMSVDVLRIQRFFEN). The chain crosses the membrane as a helical span at residues 411-431 (AQTIIGAPIQIIVVLTSLYWL). Topologically, residues 432–434 (LGK) are vacuolar. Residues 435–455 (AVIGGLVTMAIMMPINAFLSR) traverse the membrane as a helical segment. Residues 456–518 (KVKKLSKTQM…NFRKIGIVSN (63 aa)) lie on the Cytoplasmic side of the membrane. A helical transmembrane segment spans residues 519–539 (LIYFAWNCVPLMVTCSTFGLF). Residues 540–560 (SLFSDSPLSPAIVFPSLSLFN) are Vacuolar-facing. A helical membrane pass occupies residues 561 to 581 (ILNSAIYSVPSMINTIIETSV). Residues 582–972 (SMERLKSFLL…VKTKIYLAYI (391 aa)) lie on the Cytoplasmic side of the membrane. The ABC transporter 1 domain occupies 639–871 (LRTDEESIIG…KNNTSKLKKL (233 aa)). Ser645 carries the phosphoserine modification. 672–679 (GRVGAGKS) contributes to the ATP binding site. A disordered region spans residues 877-899 (SPIDNGNESDVQTEHRSESEVDE). Ser885 bears the Phosphoserine mark. Thr889 carries the post-translational modification Phosphothreonine. A phosphoserine mark is found at Ser893 and Ser895. The residue at position 916 (Thr916) is a Phosphothreonine. Phosphoserine is present on residues Ser927 and Ser931. Position 934 is a phosphothreonine (Thr934). The helical transmembrane segment at 973–993 (KACGVLGVVLFFLFMILTRVF) threads the bilayer. Positions 980–1265 (VVLFFLFMIL…IVRTTVTIET (286 aa)) constitute an ABC transmembrane type-1 2 domain. Topologically, residues 994 to 1030 (DLAENFWLKYWSESNEKNGSNERVWMFVGVYSLIGVA) are vacuolar. N-linked (GlcNAc...) asparagine glycosylation is present at Asn1011. The chain crosses the membrane as a helical span at residues 1031-1052 (SAAFNNLRSIMMLLYCSIRGSK). Residues 1053 to 1095 (KLHESMAKSVIRSPMTFFETTPVGRIINRFSSDMDAVDSNLQY) lie on the Cytoplasmic side of the membrane. Residues 1096–1116 (IFSFFFKSILTYLVTVILVGY) traverse the membrane as a helical segment. Position 1117 (Asn1117) is a topological domain, vacuolar. Residues 1118–1138 (MPWFLVFNMFLVVIYIYYQTF) form a helical membrane-spanning segment. Residues 1139–1209 (YIVLSRELKR…STNRWLSVRL (71 aa)) are Cytoplasmic-facing. A helical membrane pass occupies residues 1210–1230 (QTIGATIVLATAILALATMNT). Over 1231-1235 (KRQLS) the chain is Vacuolar. Residues 1236–1256 (SGMVGLLMSYSLEVTGSLTWI) form a helical membrane-spanning segment. The Cytoplasmic portion of the chain corresponds to 1257-1559 (VRTTVTIETN…SLCEKGGYLK (303 aa)). Residues 1302–1553 (IEFKNYSTKY…KTSIFYSLCE (252 aa)) form the ABC transporter 2 domain. 1336–1343 (GRTGAGKS) is a binding site for ATP. Over residues 1420-1433 (HLEKMLHSKPRGDD) the composition is skewed to basic and acidic residues. The tract at residues 1420–1439 (HLEKMLHSKPRGDDSNEEDG) is disordered.

Belongs to the ABC transporter superfamily.

It localises to the vacuole membrane. In terms of biological role, cooperates for the ATP-dependent vacuolar transport of bilirubin and glutathione conjugates. The sequence is that of Bile pigment transporter 1 (BPT1) from Saccharomyces cerevisiae (strain ATCC 204508 / S288c) (Baker's yeast).